A 322-amino-acid polypeptide reads, in one-letter code: Cysteine protease yopT1 (322 aa).

Active-site residues include Cys-139, His-258, and Asp-274.

Belongs to the peptidase C58 family. In terms of assembly, interacts with human ARHA.

The protein localises to the secreted. Functionally, cysteine protease, which is translocated into infected cells and plays a central role in pathogenesis by cleaving the C-terminus end of the human small GTPase RhoA/ARHA, a regulator of cytoskeleton. Once cleaved, ARHA loses its lipid modification, and is released from the cell membrane, leading to the subsequent disruption of actin cytoskeleton of the host cell. The chain is Cysteine protease yopT1 (yopT1) from Yersinia enterocolitica.